Here is a 527-residue protein sequence, read N- to C-terminus: Catalase (527 aa).

The segment covering 1 to 22 has biased composition (basic and acidic residues); it reads MSDSRDPASDQMKQWKEQRASQ. Residues 1–34 are disordered; that stretch reads MSDSRDPASDQMKQWKEQRASQRPDVLTTGGGNP. Serine 2 is modified (N-acetylserine). Serine 9 bears the Phosphoserine mark. Lysine 13 carries the post-translational modification N6-succinyllysine. A Phosphoserine modification is found at serine 21. Active-site residues include histidine 75 and asparagine 148. NADP(+) contacts are provided by histidine 194, serine 201, arginine 203, and asparagine 213. Lysine 221 bears the N6-succinyllysine mark. Lysine 233 is modified (N6-acetyllysine). NADP(+)-binding residues include lysine 237, tryptophan 303, histidine 305, and lysine 306. Lysine 306 carries the N6-acetyllysine; alternate modification. Lysine 306 carries the N6-succinyllysine; alternate modification. Residue tyrosine 358 participates in heme binding. 2 positions are modified to phosphoserine: serine 417 and serine 422. At lysine 430 the chain carries N6-acetyllysine; alternate. N6-succinyllysine; alternate is present on lysine 430. At serine 434 the chain carries Phosphoserine. Residues lysine 449 and lysine 480 each carry the N6-acetyllysine; alternate modification. N6-succinyllysine; alternate is present on residues lysine 449 and lysine 480. Lysine 499 carries the N6-acetyllysine modification. Threonine 511 carries the phosphothreonine modification. Serine 517 is modified (phosphoserine). Lysine 522 is subject to N6-succinyllysine. The Microbody targeting signal; atypical signature appears at 524–527; sequence KANL.

Belongs to the catalase family. Homotetramer. Interacts (via microbody targeting signal) with PEX5, monomeric form interacts with PEX5, leading to its translocation into peroxisomes. Heme is required as a cofactor. NADP(+) serves as cofactor.

The protein resides in the peroxisome matrix. The enzyme catalyses 2 H2O2 = O2 + 2 H2O. Its function is as follows. Catalyzes the degradation of hydrogen peroxide (H(2)O(2)) generated by peroxisomal oxidases to water and oxygen, thereby protecting cells from the toxic effects of hydrogen peroxide. Promotes growth of cells including T-cells, B-cells, myeloid leukemia cells, melanoma cells, mastocytoma cells and normal and transformed fibroblast cells. In Mus musculus (Mouse), this protein is Catalase (Cat).